The chain runs to 377 residues: Phospho-N-acetylmuramoyl-pentapeptide-transferase (377 aa).

Helical transmembrane passes span 9–29 (YITL…LVAG), 59–79 (TPTM…LLWA), 85–105 (FVWV…MDDY), 122–142 (FFWQ…AVSA), 155–175 (WVGS…VPFF), 178–198 (VSYP…IVGT), 210–230 (GLAI…AYVV), 247–267 (AAEL…FLWF), 274–294 (VFMG…IAVI), 299–319 (IVLF…MVQV), and 354–374 (QVVV…LSTL).

This sequence belongs to the glycosyltransferase 4 family. MraY subfamily. Mg(2+) is required as a cofactor.

It is found in the cell inner membrane. The enzyme catalyses UDP-N-acetyl-alpha-D-muramoyl-L-alanyl-gamma-D-glutamyl-meso-2,6-diaminopimeloyl-D-alanyl-D-alanine + di-trans,octa-cis-undecaprenyl phosphate = di-trans,octa-cis-undecaprenyl diphospho-N-acetyl-alpha-D-muramoyl-L-alanyl-D-glutamyl-meso-2,6-diaminopimeloyl-D-alanyl-D-alanine + UMP. It functions in the pathway cell wall biogenesis; peptidoglycan biosynthesis. Functionally, catalyzes the initial step of the lipid cycle reactions in the biosynthesis of the cell wall peptidoglycan: transfers peptidoglycan precursor phospho-MurNAc-pentapeptide from UDP-MurNAc-pentapeptide onto the lipid carrier undecaprenyl phosphate, yielding undecaprenyl-pyrophosphoryl-MurNAc-pentapeptide, known as lipid I. This chain is Phospho-N-acetylmuramoyl-pentapeptide-transferase, found in Bordetella bronchiseptica (strain ATCC BAA-588 / NCTC 13252 / RB50) (Alcaligenes bronchisepticus).